The primary structure comprises 94 residues: Nucleoid-associated protein MYPE8070 (94 aa).

It belongs to the YbaB/EbfC family. In terms of assembly, homodimer.

The protein localises to the cytoplasm. Its subcellular location is the nucleoid. Functionally, binds to DNA and alters its conformation. May be involved in regulation of gene expression, nucleoid organization and DNA protection. In Malacoplasma penetrans (strain HF-2) (Mycoplasma penetrans), this protein is Nucleoid-associated protein MYPE8070.